Consider the following 100-residue polypeptide: U12-ctenitoxin-Pn1a (100 aa).

The first 28 residues, 1–28 (MKYRIFKMKYTLLFLSVIALVHIFAVEA), serve as a signal peptide directing secretion. Positions 29 to 41 (KDEPESDALVPQE) are excised as a propeptide. Disulfide bonds link C44–C58, C51–C64, C57–C82, C66–C80, and C90–C97.

Belongs to the neurotoxin 09 (Tx3-6) family. Expressed by the venom gland.

It is found in the secreted. Functionally, probable neurotoxin. This Phoneutria nigriventer (Brazilian armed spider) protein is U12-ctenitoxin-Pn1a.